The primary structure comprises 912 residues: DNA ligase 4 (912 aa).

Residues glutamate 271, threonine 272, lysine 273, leucine 274, arginine 278, glutamate 331, lysine 345, phenylalanine 367, glutamate 427, lysine 432, lysine 449, and lysine 451 each contribute to the ATP site. Lysine 273 acts as the N6-AMP-lysine intermediate in catalysis. Residue glutamate 331 coordinates Mg(2+). Position 427 (glutamate 427) interacts with Mg(2+). The segment at 610–620 (LATKHLHVGDD) is required for catalytic activity. 2 BRCT domains span residues 654–743 (KVSN…PRFM) and 846–912 (LRFH…QYLL).

This sequence belongs to the ATP-dependent DNA ligase family. Interacts with XRCC4; the LIG4-XRCC4 subcomplex has a 1:2 stoichiometry and XRCC4 is required for LIG4 stability. Component of the core long-range non-homologous end joining (NHEJ) complex (also named DNA-PK complex) composed of PRKDC, LIG4, XRCC4, XRCC6/Ku70, XRCC5/Ku86 and NHEJ1/XLF. Additional component of the NHEJ complex includes PAXX. Following autophosphorylation, PRKDC dissociates from DNA, leading to formation of the short-range NHEJ complex, composed of LIG4, XRCC4, XRCC6/Ku70, XRCC5/Ku86 and NHEJ1/XLF. Interacts with DCLRE1C; the interaction is direct. Interacts with APLF. Requires Mg(2+) as cofactor.

Its subcellular location is the nucleus. It carries out the reaction ATP + (deoxyribonucleotide)n-3'-hydroxyl + 5'-phospho-(deoxyribonucleotide)m = (deoxyribonucleotide)n+m + AMP + diphosphate.. DNA ligase involved in DNA non-homologous end joining (NHEJ); required for double-strand break (DSB) repair and V(D)J recombination. Catalyzes the NHEJ ligation step of the broken DNA during DSB repair by resealing the DNA breaks after the gap filling is completed. Joins single-strand breaks in a double-stranded polydeoxynucleotide in an ATP-dependent reaction. LIG4 is mechanistically flexible: it can ligate nicks as well as compatible DNA overhangs alone, while in the presence of XRCC4, it can ligate ends with 2-nucleotides (nt) microhomology and 1-nt gaps. Forms a subcomplex with XRCC4; the LIG4-XRCC4 subcomplex is responsible for the NHEJ ligation step and XRCC4 enhances the joining activity of LIG4. Binding of the LIG4-XRCC4 complex to DNA ends is dependent on the assembly of the DNA-dependent protein kinase complex DNA-PK to these DNA ends. LIG4 regulates nuclear localization of XRCC4. The sequence is that of DNA ligase 4 from Cricetulus griseus (Chinese hamster).